Here is a 368-residue protein sequence, read N- to C-terminus: Quinolinate synthase (368 aa).

2 residues coordinate iminosuccinate: histidine 46 and serine 63. Residue cysteine 110 coordinates [4Fe-4S] cluster. Iminosuccinate is bound by residues 141–143 and serine 162; that span reads YVN. Cysteine 230 is a binding site for [4Fe-4S] cluster. Iminosuccinate contacts are provided by residues 256-258 and threonine 273; that span reads HPE. Cysteine 320 contributes to the [4Fe-4S] cluster binding site.

Belongs to the quinolinate synthase family. Type 3 subfamily. Requires [4Fe-4S] cluster as cofactor.

Its subcellular location is the cytoplasm. It catalyses the reaction iminosuccinate + dihydroxyacetone phosphate = quinolinate + phosphate + 2 H2O + H(+). The protein operates within cofactor biosynthesis; NAD(+) biosynthesis; quinolinate from iminoaspartate: step 1/1. In terms of biological role, catalyzes the condensation of iminoaspartate with dihydroxyacetone phosphate to form quinolinate. The protein is Quinolinate synthase of Bacillus cereus (strain G9842).